Consider the following 529-residue polypeptide: Bifunctional purine biosynthesis protein PurH (529 aa).

The MGS-like domain occupies M1–V148.

This sequence belongs to the PurH family.

It carries out the reaction (6R)-10-formyltetrahydrofolate + 5-amino-1-(5-phospho-beta-D-ribosyl)imidazole-4-carboxamide = 5-formamido-1-(5-phospho-D-ribosyl)imidazole-4-carboxamide + (6S)-5,6,7,8-tetrahydrofolate. The catalysed reaction is IMP + H2O = 5-formamido-1-(5-phospho-D-ribosyl)imidazole-4-carboxamide. The protein operates within purine metabolism; IMP biosynthesis via de novo pathway; 5-formamido-1-(5-phospho-D-ribosyl)imidazole-4-carboxamide from 5-amino-1-(5-phospho-D-ribosyl)imidazole-4-carboxamide (10-formyl THF route): step 1/1. Its pathway is purine metabolism; IMP biosynthesis via de novo pathway; IMP from 5-formamido-1-(5-phospho-D-ribosyl)imidazole-4-carboxamide: step 1/1. This Salmonella paratyphi A (strain ATCC 9150 / SARB42) protein is Bifunctional purine biosynthesis protein PurH.